Consider the following 223-residue polypeptide: ATP phosphoribosyltransferase (223 aa).

It belongs to the ATP phosphoribosyltransferase family. Short subfamily. As to quaternary structure, heteromultimer composed of HisG and HisZ subunits.

The protein resides in the cytoplasm. The catalysed reaction is 1-(5-phospho-beta-D-ribosyl)-ATP + diphosphate = 5-phospho-alpha-D-ribose 1-diphosphate + ATP. The protein operates within amino-acid biosynthesis; L-histidine biosynthesis; L-histidine from 5-phospho-alpha-D-ribose 1-diphosphate: step 1/9. Functionally, catalyzes the condensation of ATP and 5-phosphoribose 1-diphosphate to form N'-(5'-phosphoribosyl)-ATP (PR-ATP). Has a crucial role in the pathway because the rate of histidine biosynthesis seems to be controlled primarily by regulation of HisG enzymatic activity. The sequence is that of ATP phosphoribosyltransferase from Novosphingobium aromaticivorans (strain ATCC 700278 / DSM 12444 / CCUG 56034 / CIP 105152 / NBRC 16084 / F199).